We begin with the raw amino-acid sequence, 1309 residues long: Angiotensin-converting enzyme (1309 aa).

The N-terminal stretch at 1-33 (MGAASGCRWPWPPLLPLLLMLLLPPPPLPVALA) is a signal peptide. Residues 34 to 1259 (LDSALQPGNF…GLNLEEQQAR (1226 aa)) are Extracellular-facing. Residues asparagine 42, asparagine 58, asparagine 78, asparagine 115, asparagine 135, asparagine 150, and asparagine 164 are each glycosylated (N-linked (GlcNAc...) asparagine). Peptidase M2 domains lie at 44–627 (TADE…LGWP) and 646–1225 (VSDE…LGWP). Cysteine 161 and cysteine 169 are disulfide-bonded. Residue tyrosine 235 participates in chloride binding. N-linked (GlcNAc...) asparagine glycosylation is present at asparagine 322. Cysteine 363 and cysteine 381 form a disulfide bridge. Histidine 394 contributes to the Zn(2+) binding site. Catalysis depends on glutamate 395, which acts as the Proton acceptor 1. Zn(2+) is bound by residues histidine 398 and glutamate 422. Asparagine 512 carries N-linked (GlcNAc...) asparagine glycosylation. Histidine 523 acts as the Proton donor 1 in catalysis. An N-linked (GlcNAc...) asparagine glycan is attached at asparagine 526. Residue arginine 532 participates in chloride binding. Cysteine 548 and cysteine 560 are joined by a disulfide. 4 N-linked (GlcNAc...) asparagine glycosylation sites follow: asparagine 680, asparagine 698, asparagine 717, and asparagine 763. Cysteine 760 and cysteine 766 form a disulfide bridge. Arginine 794 and tyrosine 832 together coordinate chloride. Asparagine 945 carries N-linked (GlcNAc...) asparagine glycosylation. Cysteine 960 and cysteine 978 are disulfide-bonded. Residue histidine 991 participates in Zn(2+) binding. The active-site Proton acceptor 2 is glutamate 992. Histidine 995 and glutamate 1019 together coordinate Zn(2+). Positions 1093 and 1097 each coordinate chloride. Catalysis depends on histidine 1121, which acts as the Proton donor 2. Arginine 1130 contributes to the chloride binding site. Residues cysteine 1146 and cysteine 1158 are joined by a disulfide bond. Asparagine 1194 and asparagine 1228 each carry an N-linked (GlcNAc...) asparagine glycan. The segment at 1218–1259 (HGEKLGWPQYNWTPNSARLEGSFAGTGRVNFLGLNLEEQQAR) is juxtamembrane stalk. Residues 1260–1280 (VGQWVLLFLGVTLLVATMGLT) traverse the membrane as a helical segment. The Cytoplasmic portion of the chain corresponds to 1281-1309 (QRLFSIRHQILRRTHRGPQFGSEVELRHS). Serine 1302 bears the Phosphoserine mark.

The protein belongs to the peptidase M2 family. Monomer and homodimer; homodimerizes following binding to an inhibitor. Interacts with calmodulin (CALM1, CALM2 or CALM3); interaction takes place in the cytoplasmic region and regulates phosphorylation and proteolytic cleavage. It depends on Zn(2+) as a cofactor. Requires chloride as cofactor. In terms of processing, produced following proteolytic cleavage by secretase enzymes that cleave the transmembrane form in the juxtamembrane stalk region upstream of the transmembrane region. Cleavage can take place at different sites of the juxtamembrane stalk region. Phosphorylated by CK2 on Ser-1302; which allows membrane retention. Phosphorylated on tyrosine residues on its extracellular part, promoting cleavage by secretase enzymes and formation of the soluble form (Angiotensin-converting enzyme, soluble form).

The protein localises to the cell membrane. It is found in the cytoplasm. Its subcellular location is the secreted. The enzyme catalyses Release of a C-terminal dipeptide, oligopeptide-|-Xaa-Yaa, when Xaa is not Pro, and Yaa is neither Asp nor Glu. Thus, conversion of angiotensin I to angiotensin II, with increase in vasoconstrictor activity, but no action on angiotensin II.. It carries out the reaction angiotensin I + H2O = L-histidyl-L-leucine + angiotensin II. It catalyses the reaction bradykinin + H2O = L-Phe-L-Arg + bradykinin(1-7). The catalysed reaction is substance P + H2O = substance P(1-9) + L-Leu-L-Met-NH2. The enzyme catalyses substance P + H2O = substance P(1-8) + Gly-L-Leu-L-Met-NH2. It carries out the reaction substance P + H2O = L-Phe-L-Phe-Gly-L-Leu-L-Met-NH2 + substance P(1-6). It catalyses the reaction neurotensin + H2O = neurotensin(1-11) + L-isoleucyl-L-leucine. The catalysed reaction is goralatide + H2O = N-acetyl-L-seryl-L-aspartate + L-lysyl-L-proline. The enzyme catalyses Met-enkephalin + H2O = L-phenylalanyl-L-methionine + L-tyrosylglycylglycine. It carries out the reaction Leu-enkephalin + H2O = L-tyrosylglycylglycine + L-phenylalanyl-L-leucine. It catalyses the reaction Met-enkephalin-Arg-Phe + H2O = L-arginyl-L-phenylalanine + Met-enkephalin. The dipeptidyl carboxypeptidase activity is strongly activated by chloride. The dipeptidyl carboxypeptidase activity is specifically inhibited by lisinopril, captopril and enalaprilat. In terms of biological role, dipeptidyl carboxypeptidase that removes dipeptides from the C-terminus of a variety of circulating hormones, such as angiotensin I, bradykinin or enkephalins, thereby playing a key role in the regulation of blood pressure, electrolyte homeostasis or synaptic plasticity. Composed of two similar catalytic domains, each possessing a functional active site, with different selectivity for substrates. Plays a major role in the angiotensin-renin system that regulates blood pressure and sodium retention by the kidney by converting angiotensin I to angiotensin II, resulting in an increase of the vasoconstrictor activity of angiotensin. Also able to inactivate bradykinin, a potent vasodilator, and therefore enhance the blood pressure response. Acts as a regulator of synaptic transmission by mediating cleavage of neuropeptide hormones, such as substance P, neurotensin or enkephalins. Catalyzes degradation of different enkephalin neuropeptides (Met-enkephalin, Leu-enkephalin, Met-enkephalin-Arg-Phe and possibly Met-enkephalin-Arg-Gly-Leu). Acts as a regulator of synaptic plasticity in the nucleus accumbens of the brain by mediating cleavage of Met-enkephalin-Arg-Phe, a strong ligand of Mu-type opioid receptor OPRM1, into Met-enkephalin. Met-enkephalin-Arg-Phe cleavage by ACE decreases activation of OPRM1, leading to long-term synaptic potentiation of glutamate release. Also acts as a regulator of hematopoietic stem cell differentiation by mediating degradation of hemoregulatory peptide N-acetyl-SDKP (AcSDKP). Acts as a regulator of cannabinoid signaling pathway by mediating degradation of hemopressin, an antagonist peptide of the cannabinoid receptor CNR1. Involved in amyloid-beta metabolism by catalyzing degradation of Amyloid-beta protein 40 and Amyloid-beta protein 42 peptides, thereby preventing plaque formation. Catalyzes cleavage of cholecystokinin (maturation of Cholecystokinin-8 and Cholecystokinin-5) and Gonadoliberin-1 (both maturation and degradation) hormones. Degradation of hemoregulatory peptide N-acetyl-SDKP (AcSDKP) and amyloid-beta proteins is mediated by the N-terminal catalytic domain, while angiotensin I and cholecystokinin cleavage is mediated by the C-terminal catalytic region. Soluble form that is released in blood plasma and other body fluids following proteolytic cleavage in the juxtamembrane stalk region. This Sus scrofa (Pig) protein is Angiotensin-converting enzyme.